Reading from the N-terminus, the 566-residue chain is Oxygen-dependent choline dehydrogenase (566 aa).

Residue 7–36 participates in FAD binding; the sequence is DYIICGAGSAGNVLATRLTEDPDVTVLLLE. Residues 180–202 are disordered; sequence NGYQQEGFGPMDRTVTPKGRRAS. His474 functions as the Proton acceptor in the catalytic mechanism.

It belongs to the GMC oxidoreductase family. FAD is required as a cofactor.

It carries out the reaction choline + A = betaine aldehyde + AH2. It catalyses the reaction betaine aldehyde + NAD(+) + H2O = glycine betaine + NADH + 2 H(+). The protein operates within amine and polyamine biosynthesis; betaine biosynthesis via choline pathway; betaine aldehyde from choline (cytochrome c reductase route): step 1/1. In terms of biological role, involved in the biosynthesis of the osmoprotectant glycine betaine. Catalyzes the oxidation of choline to betaine aldehyde and betaine aldehyde to glycine betaine at the same rate. The chain is Oxygen-dependent choline dehydrogenase from Burkholderia cenocepacia (strain HI2424).